A 166-amino-acid polypeptide reads, in one-letter code: Ubiquitin-conjugating enzyme E2 7 (166 aa).

The residue at position 2 (alanine 2) is an N-acetylalanine. Residues glutamine 4–glutamate 164 form the UBC core domain. Cysteine 89 acts as the Glycyl thioester intermediate in catalysis.

It belongs to the ubiquitin-conjugating enzyme family.

It carries out the reaction S-ubiquitinyl-[E1 ubiquitin-activating enzyme]-L-cysteine + [E2 ubiquitin-conjugating enzyme]-L-cysteine = [E1 ubiquitin-activating enzyme]-L-cysteine + S-ubiquitinyl-[E2 ubiquitin-conjugating enzyme]-L-cysteine.. Its pathway is protein modification; protein ubiquitination. Its function is as follows. Accepts the ubiquitin from the E1 complex and catalyzes its covalent attachment to other proteins. Involved in the formation of multiubiquitin chains. Signal the protein for selective degradation. The chain is Ubiquitin-conjugating enzyme E2 7 (UBC7) from Arabidopsis thaliana (Mouse-ear cress).